We begin with the raw amino-acid sequence, 133 residues long: Large ribosomal subunit protein bL17 (133 aa).

This sequence belongs to the bacterial ribosomal protein bL17 family. In terms of assembly, part of the 50S ribosomal subunit. Contacts protein L32.

The sequence is that of Large ribosomal subunit protein bL17 from Ehrlichia chaffeensis (strain ATCC CRL-10679 / Arkansas).